The primary structure comprises 452 residues: Sodium-coupled neutral amino acid transporter 7 (452 aa).

The next 11 membrane-spanning stretches (helical) occupy residues 46–66 (AVFI…PAAF), 74–94 (AAIS…VILA), 120–140 (LCEV…FIII), 168–188 (FTIS…REIS), 195–215 (FLSV…CIWP), 234–256 (VFNA…PVYG), 272–292 (IAMF…FLLF), 309–329 (IAVA…YPIL), 361–381 (VLQT…IPDI), 385–405 (ISLI…LCLI), and 419–439 (SWWA…FIFG).

This sequence belongs to the amino acid/polyamine transporter 2 family.

It is found in the lysosome membrane. The protein resides in the cell projection. Its subcellular location is the axon. The enzyme catalyses L-asparagine(in) + Na(+)(in) = L-asparagine(out) + Na(+)(out). It catalyses the reaction L-glutamine(in) + Na(+)(in) = L-glutamine(out) + Na(+)(out). Symporter that selectively cotransports sodium ions and amino acids, such as L-glutamine and L-asparagine from the lysosome into the cytoplasm and may participates in mTORC1 activation. The transport activity requires an acidic lysosomal lumen. This chain is Sodium-coupled neutral amino acid transporter 7, found in Xenopus laevis (African clawed frog).